The primary structure comprises 457 residues: Chromosomal replication initiator protein DnaA (457 aa).

Residues 1 to 71 (MSPSIWEKCL…LLKNFCNINT (71 aa)) form a domain I, interacts with DnaA modulators region. The interval 71 to 119 (TTPTLMLKICKPKIIQKKFFNELTLKKNILNSKLTYNVNTKLSNIIYSS) is domain II. A domain III, AAA+ region region spans residues 120–337 (EINTNYTFQN…GALNKILANS (218 aa)). The ATP site is built by glycine 165, glycine 167, lysine 168, and threonine 169. The domain IV, binds dsDNA stretch occupies residues 338-457 (DSKKKIITIN…FLTLLKILSS (120 aa)).

This sequence belongs to the DnaA family. As to quaternary structure, oligomerizes as a right-handed, spiral filament on DNA at oriC.

The protein resides in the cytoplasm. Plays an essential role in the initiation and regulation of chromosomal replication. ATP-DnaA binds to the origin of replication (oriC) to initiate formation of the DNA replication initiation complex once per cell cycle. Binds the DnaA box (a 9 base pair repeat at the origin) and separates the double-stranded (ds)DNA. Forms a right-handed helical filament on oriC DNA; dsDNA binds to the exterior of the filament while single-stranded (ss)DNA is stabiized in the filament's interior. The ATP-DnaA-oriC complex binds and stabilizes one strand of the AT-rich DNA unwinding element (DUE), permitting loading of DNA polymerase. After initiation quickly degrades to an ADP-DnaA complex that is not apt for DNA replication. Binds acidic phospholipids. This is Chromosomal replication initiator protein DnaA from Buchnera aphidicola subsp. Baizongia pistaciae (strain Bp).